Consider the following 345-residue polypeptide: Dihydroorotate dehydrogenase (quinone) (345 aa).

Residues 65–69 (AGLDK) and Thr89 each bind FMN. Lys69 is a substrate binding site. Substrate is bound at residue 114-118 (NRMGF). The FMN site is built by Asn146 and Asn179. Asn179 contributes to the substrate binding site. The active-site Nucleophile is Ser182. Asn184 is a substrate binding site. 2 residues coordinate FMN: Lys224 and Thr252. 253-254 (NT) contacts substrate. FMN-binding positions include Gly275, Gly304, and 325–326 (YT).

Belongs to the dihydroorotate dehydrogenase family. Type 2 subfamily. As to quaternary structure, monomer. The cofactor is FMN.

The protein localises to the cell membrane. The catalysed reaction is (S)-dihydroorotate + a quinone = orotate + a quinol. It participates in pyrimidine metabolism; UMP biosynthesis via de novo pathway; orotate from (S)-dihydroorotate (quinone route): step 1/1. Its function is as follows. Catalyzes the conversion of dihydroorotate to orotate with quinone as electron acceptor. The chain is Dihydroorotate dehydrogenase (quinone) from Janthinobacterium sp. (strain Marseille) (Minibacterium massiliensis).